The chain runs to 140 residues: Nucleoside diphosphate kinase (140 aa).

Residues Lys-11, Phe-59, Arg-87, Thr-93, Arg-104, and Asn-114 each contribute to the ATP site. The active-site Pros-phosphohistidine intermediate is the His-117.

The protein belongs to the NDK family. As to quaternary structure, homotetramer. It depends on Mg(2+) as a cofactor.

It is found in the cytoplasm. The catalysed reaction is a 2'-deoxyribonucleoside 5'-diphosphate + ATP = a 2'-deoxyribonucleoside 5'-triphosphate + ADP. The enzyme catalyses a ribonucleoside 5'-diphosphate + ATP = a ribonucleoside 5'-triphosphate + ADP. Its function is as follows. Major role in the synthesis of nucleoside triphosphates other than ATP. The ATP gamma phosphate is transferred to the NDP beta phosphate via a ping-pong mechanism, using a phosphorylated active-site intermediate. The protein is Nucleoside diphosphate kinase of Persephonella marina (strain DSM 14350 / EX-H1).